The sequence spans 413 residues: 5'-deoxyadenosine deaminase (413 aa).

Positions 57 and 59 each coordinate Zn(2+). Positions 86 and 171 each coordinate substrate. H198 provides a ligand contact to Zn(2+). Substrate contacts are provided by E201 and D286. Residue D286 coordinates Zn(2+).

Belongs to the metallo-dependent hydrolases superfamily. MTA/SAH deaminase family. In terms of assembly, homotetramer. Requires Zn(2+) as cofactor.

The enzyme catalyses 5'-deoxyadenosine + H2O + H(+) = 5'-deoxyinosine + NH4(+). It carries out the reaction S-adenosyl-L-homocysteine + H2O + H(+) = S-inosyl-L-homocysteine + NH4(+). It catalyses the reaction S-methyl-5'-thioadenosine + H2O + H(+) = S-methyl-5'-thioinosine + NH4(+). The catalysed reaction is adenosine + H2O + H(+) = inosine + NH4(+). The protein operates within amino-acid biosynthesis; S-adenosyl-L-methionine biosynthesis. Catalyzes the deamination of three SAM-derived enzymatic products, namely 5'-deoxyadenosine, S-adenosyl-L-homocysteine, and 5'-methylthioadenosine, to produce the inosine analogs. Can also deaminate adenosine. The preferred substrate for this enzyme is 5'-deoxyadenosine, but all these substrates are efficiently deaminated. Likely functions in a S-adenosyl-L-methionine (SAM) recycling pathway from S-adenosyl-L-homocysteine (SAH) produced from SAM-dependent methylation reactions. May also be involved in the recycling of 5'-deoxyadenosine, whereupon the 5'-deoxyribose moiety of 5'-deoxyinosine is further metabolized to deoxyhexoses used for the biosynthesis of aromatic amino acids in methanogens. The polypeptide is 5'-deoxyadenosine deaminase (Methanothrix thermoacetophila (strain DSM 6194 / JCM 14653 / NBRC 101360 / PT) (Methanosaeta thermophila)).